Here is a 262-residue protein sequence, read N- to C-terminus: T-cell surface glycoprotein YE1/48 (262 aa).

The Cytoplasmic portion of the chain corresponds to 1–44 (MSEQEVTYSMVRFHKSAGLQKQVRPEETKGPREAGYRRCSFHWK). The chain crosses the membrane as a helical; Signal-anchor for type II membrane protein span at residues 45–66 (FIVIALGIFCFLLLVAVSVLAI). Residues 67–262 (KIFQYDQQKN…CGKRLDKFPH (196 aa)) are Extracellular-facing. N-linked (GlcNAc...) asparagine glycans are attached at residues Asn-86, Asn-103, and Asn-123. Residues 137 to 139 (RGD) carry the Cell attachment site motif. In terms of domain architecture, C-type lectin spans 138 to 257 (GDKVYWFCYG…VFICICGKRL (120 aa)). 4 disulfides stabilise this stretch: Cys-145–Cys-150, Cys-163–Cys-251, Cys-167–Cys-253, and Cys-232–Cys-245.

Homodimer; disulfide-linked. High, in T-lymphoma lines, very low in normal lymphocytes.

It localises to the membrane. In terms of biological role, receptor on natural killer (NK) cells for H-2d alleles. Inhibits the activity of NK cells thus preventing cell lysis. In Mus musculus (Mouse), this protein is T-cell surface glycoprotein YE1/48 (Klra1).